A 507-amino-acid polypeptide reads, in one-letter code: Probable cytosol aminopeptidase (507 aa).

Residues Lys275 and Asp280 each contribute to the Mn(2+) site. Lys287 is a catalytic residue. Residues Asp298, Asp357, and Glu359 each contribute to the Mn(2+) site. Arg361 is a catalytic residue.

This sequence belongs to the peptidase M17 family. The cofactor is Mn(2+).

It localises to the cytoplasm. The enzyme catalyses Release of an N-terminal amino acid, Xaa-|-Yaa-, in which Xaa is preferably Leu, but may be other amino acids including Pro although not Arg or Lys, and Yaa may be Pro. Amino acid amides and methyl esters are also readily hydrolyzed, but rates on arylamides are exceedingly low.. The catalysed reaction is Release of an N-terminal amino acid, preferentially leucine, but not glutamic or aspartic acids.. Functionally, presumably involved in the processing and regular turnover of intracellular proteins. Catalyzes the removal of unsubstituted N-terminal amino acids from various peptides. This chain is Probable cytosol aminopeptidase, found in Acidobacterium capsulatum (strain ATCC 51196 / DSM 11244 / BCRC 80197 / JCM 7670 / NBRC 15755 / NCIMB 13165 / 161).